The sequence spans 42 residues: MEIVTEKDLKNIEEQLKSVVRDQDRFRLIKANANSFISQVNK.

This is an uncharacterized protein from Dictyostelium discoideum (Social amoeba).